The sequence spans 329 residues: Ketol-acid reductoisomerase (NADP(+)) (329 aa).

The KARI N-terminal Rossmann domain occupies 2-182; sequence TQLFYDTDAD…GGTRAGILET (181 aa). Residues 25–28, serine 51, serine 53, and 83–86 each bind NADP(+); these read YGSQ and DEFQ. The active site involves histidine 108. Residue glycine 134 coordinates NADP(+). Positions 183–328 constitute a KARI C-terminal knotted domain; the sequence is NFKEETETDL…KGLRSMFSWL (146 aa). 4 residues coordinate Mg(2+): aspartate 191, glutamate 195, glutamate 227, and glutamate 231. A substrate-binding site is contributed by serine 252.

It belongs to the ketol-acid reductoisomerase family. It depends on Mg(2+) as a cofactor.

It catalyses the reaction (2R)-2,3-dihydroxy-3-methylbutanoate + NADP(+) = (2S)-2-acetolactate + NADPH + H(+). It carries out the reaction (2R,3R)-2,3-dihydroxy-3-methylpentanoate + NADP(+) = (S)-2-ethyl-2-hydroxy-3-oxobutanoate + NADPH + H(+). Its pathway is amino-acid biosynthesis; L-isoleucine biosynthesis; L-isoleucine from 2-oxobutanoate: step 2/4. The protein operates within amino-acid biosynthesis; L-valine biosynthesis; L-valine from pyruvate: step 2/4. Involved in the biosynthesis of branched-chain amino acids (BCAA). Catalyzes an alkyl-migration followed by a ketol-acid reduction of (S)-2-acetolactate (S2AL) to yield (R)-2,3-dihydroxy-isovalerate. In the isomerase reaction, S2AL is rearranged via a Mg-dependent methyl migration to produce 3-hydroxy-3-methyl-2-ketobutyrate (HMKB). In the reductase reaction, this 2-ketoacid undergoes a metal-dependent reduction by NADPH to yield (R)-2,3-dihydroxy-isovalerate. This chain is Ketol-acid reductoisomerase (NADP(+)), found in Prochlorococcus marinus (strain MIT 9312).